Reading from the N-terminus, the 495-residue chain is Prenylcysteine oxidase 1-like (495 aa).

Positions M1–G22 are cleaved as a signal peptide. Residues N185 and N343 are each glycosylated (N-linked (GlcNAc...) asparagine).

The protein belongs to the prenylcysteine oxidase family. Requires FAD as cofactor.

It is found in the secreted. Likely to have oxidoreductase activity. Required in the mevalonate pathway to regulate prenylation and enhances the bactericidal activity of neutrophils. This chain is Prenylcysteine oxidase 1-like (Pcyox1l), found in Mus musculus (Mouse).